A 205-amino-acid chain; its full sequence is Recombination protein RecR (205 aa).

The C4-type zinc finger occupies 60 to 75 (CKVCHNISDTETCQIC). Residues 83 to 178 (STVCVVENIR…KLSVIARGIS (96 aa)) enclose the Toprim domain.

The protein belongs to the RecR family.

Its function is as follows. May play a role in DNA repair. It seems to be involved in an RecBC-independent recombinational process of DNA repair. It may act with RecF and RecO. This is Recombination protein RecR from Bacteroides thetaiotaomicron (strain ATCC 29148 / DSM 2079 / JCM 5827 / CCUG 10774 / NCTC 10582 / VPI-5482 / E50).